The primary structure comprises 552 residues: CTP synthase (552 aa).

An amidoligase domain region spans residues 1-265 (MTKYIFITGG…DEIVVRKLRL (265 aa)). Ser13 is a binding site for CTP. Ser13 contributes to the UTP binding site. ATP is bound by residues 14 to 19 (SLGKGI) and Asp71. 2 residues coordinate Mg(2+): Asp71 and Glu139. CTP contacts are provided by residues 146-148 (DIE), 186-191 (KTKPTQ), and Lys222. UTP is bound by residues 186-191 (KTKPTQ) and Lys222. A Glutamine amidotransferase type-1 domain is found at 290-541 (TVAMVGKYVN…VRAARARSEG (252 aa)). Residue Gly351 participates in L-glutamine binding. The active-site Nucleophile; for glutamine hydrolysis is Cys378. L-glutamine-binding positions include 379–382 (LGMQ), Glu402, and Arg469. Catalysis depends on residues His514 and Glu516.

Belongs to the CTP synthase family. As to quaternary structure, homotetramer.

The catalysed reaction is UTP + L-glutamine + ATP + H2O = CTP + L-glutamate + ADP + phosphate + 2 H(+). It catalyses the reaction L-glutamine + H2O = L-glutamate + NH4(+). It carries out the reaction UTP + NH4(+) + ATP = CTP + ADP + phosphate + 2 H(+). It functions in the pathway pyrimidine metabolism; CTP biosynthesis via de novo pathway; CTP from UDP: step 2/2. With respect to regulation, allosterically activated by GTP, when glutamine is the substrate; GTP has no effect on the reaction when ammonia is the substrate. The allosteric effector GTP functions by stabilizing the protein conformation that binds the tetrahedral intermediate(s) formed during glutamine hydrolysis. Inhibited by the product CTP, via allosteric rather than competitive inhibition. Functionally, catalyzes the ATP-dependent amination of UTP to CTP with either L-glutamine or ammonia as the source of nitrogen. Regulates intracellular CTP levels through interactions with the four ribonucleotide triphosphates. The sequence is that of CTP synthase from Methylococcus capsulatus (strain ATCC 33009 / NCIMB 11132 / Bath).